The chain runs to 308 residues: Ribosomal RNA small subunit methyltransferase H (308 aa).

S-adenosyl-L-methionine-binding positions include 34 to 36, D54, F80, D101, and Q108; that span reads GGH.

This sequence belongs to the methyltransferase superfamily. RsmH family.

Its subcellular location is the cytoplasm. The enzyme catalyses cytidine(1402) in 16S rRNA + S-adenosyl-L-methionine = N(4)-methylcytidine(1402) in 16S rRNA + S-adenosyl-L-homocysteine + H(+). Its function is as follows. Specifically methylates the N4 position of cytidine in position 1402 (C1402) of 16S rRNA. The sequence is that of Ribosomal RNA small subunit methyltransferase H from Ureaplasma parvum serovar 3 (strain ATCC 27815 / 27 / NCTC 11736).